Here is a 604-residue protein sequence, read N- to C-terminus: Elongation factor 4 (604 aa).

Residues 7-189 form the tr-type G domain; the sequence is SRLRNFCIIA…AVVDRIPPPA (183 aa). Residues 19 to 24 and 136 to 139 contribute to the GTP site; these read DHGKST and NKID.

The protein belongs to the TRAFAC class translation factor GTPase superfamily. Classic translation factor GTPase family. LepA subfamily.

The protein resides in the cell inner membrane. The enzyme catalyses GTP + H2O = GDP + phosphate + H(+). Functionally, required for accurate and efficient protein synthesis under certain stress conditions. May act as a fidelity factor of the translation reaction, by catalyzing a one-codon backward translocation of tRNAs on improperly translocated ribosomes. Back-translocation proceeds from a post-translocation (POST) complex to a pre-translocation (PRE) complex, thus giving elongation factor G a second chance to translocate the tRNAs correctly. Binds to ribosomes in a GTP-dependent manner. In Prochlorococcus marinus (strain MIT 9313), this protein is Elongation factor 4.